An 85-amino-acid chain; its full sequence is MEAGERIDASQLPHRVLETRGHAISILFGFWTSFICDTYIVLAWISKIKGSPDVSASSDEPYARIQQSRRQCHAEEDQSQVPEAG.

The helical transmembrane segment at 21-43 (GHAISILFGFWTSFICDTYIVLA) threads the bilayer. Positions 51–85 (SPDVSASSDEPYARIQQSRRQCHAEEDQSQVPEAG) are disordered.

The protein localises to the membrane. This chain is Small integral membrane protein 2 (SMIM2), found in Homo sapiens (Human).